A 511-amino-acid chain; its full sequence is 2,3-bisphosphoglycerate-independent phosphoglycerate mutase (511 aa).

Asp12 provides a ligand contact to Mn(2+). Phosphotyrosine is present on Tyr36. Residue Ser62 participates in Mn(2+) binding. The Phosphoserine intermediate role is filled by Ser62. Substrate-binding positions include His123, 153–154, Arg185, Arg191, 261–264, and Lys336; these read RD and RPDR. Asp403, His407, Asp444, His445, and His462 together coordinate Mn(2+).

The protein belongs to the BPG-independent phosphoglycerate mutase family. As to quaternary structure, monomer. The cofactor is Mn(2+).

The enzyme catalyses (2R)-2-phosphoglycerate = (2R)-3-phosphoglycerate. It functions in the pathway carbohydrate degradation; glycolysis; pyruvate from D-glyceraldehyde 3-phosphate: step 3/5. In terms of biological role, essential for rapid growth and for sporulation. Catalyzes the interconversion of 2-phosphoglycerate and 3-phosphoglycerate. This Bacillus licheniformis (strain ATCC 14580 / DSM 13 / JCM 2505 / CCUG 7422 / NBRC 12200 / NCIMB 9375 / NCTC 10341 / NRRL NRS-1264 / Gibson 46) protein is 2,3-bisphosphoglycerate-independent phosphoglycerate mutase.